We begin with the raw amino-acid sequence, 148 residues long: Snaclec flavocetin-A subunit beta (148 aa).

The signal sequence occupies residues 1 to 23 (MGQFIFVSFGFLVVATSLSGTEA). Intrachain disulfides connect C27-C38, C55-C144, and C121-C136. The region spanning 34–145 (YDEHCYQVFQ…CSSKRYVVCK (112 aa)) is the C-type lectin domain.

Belongs to the snaclec family. As to quaternary structure, tetramer of heterodimers of alpha and beta subunits (alphabeta)(4); disulfide-linked. As to expression, expressed by the venom gland.

It is found in the secreted. Its function is as follows. Strong platelet aggregation inhibitor. Binds specifically to platelet glycoprotein Ibalpha (GP1BA) with high affinity and inhibits vWF-dependent platelet aggregation. Has also been observed to induce small agglutinates in washed platelets by binding to GPIb. The sequence is that of Snaclec flavocetin-A subunit beta from Protobothrops flavoviridis (Habu).